A 232-amino-acid polypeptide reads, in one-letter code: Lipoprotein-releasing system ATP-binding protein LolD (232 aa).

An ABC transporter domain is found at 11–232; sequence IEVTDLQRAF…LHDGRLIEEY (222 aa). Residue 47 to 54 participates in ATP binding; the sequence is GPSGAGKS.

Belongs to the ABC transporter superfamily. Lipoprotein translocase (TC 3.A.1.125) family. In terms of assembly, the complex is composed of two ATP-binding proteins (LolD) and two transmembrane proteins (LolC and LolE).

The protein resides in the cell inner membrane. Functionally, part of the ABC transporter complex LolCDE involved in the translocation of mature outer membrane-directed lipoproteins, from the inner membrane to the periplasmic chaperone, LolA. Responsible for the formation of the LolA-lipoprotein complex in an ATP-dependent manner. The chain is Lipoprotein-releasing system ATP-binding protein LolD from Zymomonas mobilis subsp. mobilis (strain ATCC 10988 / DSM 424 / LMG 404 / NCIMB 8938 / NRRL B-806 / ZM1).